A 194-amino-acid polypeptide reads, in one-letter code: ATP-dependent Clp protease proteolytic subunit (194 aa).

Residue S98 is the Nucleophile of the active site. Residue H123 is part of the active site.

This sequence belongs to the peptidase S14 family. Fourteen ClpP subunits assemble into 2 heptameric rings which stack back to back to give a disk-like structure with a central cavity, resembling the structure of eukaryotic proteasomes.

It localises to the cytoplasm. It carries out the reaction Hydrolysis of proteins to small peptides in the presence of ATP and magnesium. alpha-casein is the usual test substrate. In the absence of ATP, only oligopeptides shorter than five residues are hydrolyzed (such as succinyl-Leu-Tyr-|-NHMec, and Leu-Tyr-Leu-|-Tyr-Trp, in which cleavage of the -Tyr-|-Leu- and -Tyr-|-Trp bonds also occurs).. In terms of biological role, cleaves peptides in various proteins in a process that requires ATP hydrolysis. Has a chymotrypsin-like activity. Plays a major role in the degradation of misfolded proteins. In Ruminiclostridium cellulolyticum (strain ATCC 35319 / DSM 5812 / JCM 6584 / H10) (Clostridium cellulolyticum), this protein is ATP-dependent Clp protease proteolytic subunit.